A 243-amino-acid polypeptide reads, in one-letter code: Venom nerve growth factor 1 (243 aa).

The signal sequence occupies residues 1-18; that stretch reads MSMLCYTLIIAFLIGIWA. A propeptide spanning residues 19 to 125 is cleaved from the precursor; the sequence is APKSEDNVPL…TLNRNIRAKR (107 aa). Basic and acidic residues predominate over residues 47–66; the sequence is GLKTSRNTDQRHPAPKKAED. Residues 47–69 are disordered; sequence GLKTSRNTDQRHPAPKKAEDQEL. Intrachain disulfides connect C139/C204, C182/C232, and C192/C234. A glycan (N-linked (GlcNAc...) asparagine) is linked at N148.

It belongs to the NGF-beta family. As to quaternary structure, homodimer; non-covalently linked. In terms of tissue distribution, expressed by the venom gland.

The protein resides in the secreted. Nerve growth factor is important for the development and maintenance of the sympathetic and sensory nervous systems. It stimulates division and differentiation of sympathetic and embryonic sensory neurons as well as basal forebrain cholinergic neurons in the brain. Its relevance in the snake venom is not clear. However, it has been shown to inhibit metalloproteinase-dependent proteolysis of platelet glycoprotein Ib alpha, suggesting a metalloproteinase inhibition to prevent metalloprotease autodigestion and/or protection against prey proteases. Binds a lipid between the two protein chains in the homodimer. The lipid-bound form promotes histamine relase from mouse mast cells, contrary to the lipid-free form. The polypeptide is Venom nerve growth factor 1 (Pseudonaja textilis (Eastern brown snake)).